A 686-amino-acid chain; its full sequence is Osmo-dependent choline transporter BetT2 (686 aa).

The Cytoplasmic portion of the chain corresponds to 1–22; that stretch reads MATDNPRAVDDQETHPKDRLNR. The chain crosses the membrane as a helical span at residues 23–43; that stretch reads VVFYVSALIILIFSLTTILFN. Residues 44–60 lie on the Periplasmic side of the membrane; that stretch reads DFANRALNQVLDWVSST. The helical transmembrane segment at 61–81 threads the bilayer; sequence FSWYYLLAATLYMVFVIFIAC. The Cytoplasmic segment spans residues 82–100; it reads SRYGNIKLGPKHSKPEFSL. The helical transmembrane segment at 101–121 threads the bilayer; sequence LSWSAMLFSAGIGIDLMFFSV. The Periplasmic segment spans residues 122–150; the sequence is AEPLSHYMHPPVGEGQTYEAARQGMVWTL. A helical transmembrane segment spans residues 151–171; sequence FHYGLTGWCMYALIGMALGYF. Residues 172–203 lie on the Cytoplasmic side of the membrane; that stretch reads SYRYNLPLTIRSALYPIFGKKINGPIGHSVDT. A helical transmembrane segment spans residues 204–224; it reads AAVIGTIFGIATTCGIGVVQL. At 225–237 the chain is on the periplasmic side; the sequence is NYGLHVLFDLPEN. A helical transmembrane segment spans residues 238 to 258; sequence LWVQTALILVAVIITIISVTS. The Cytoplasmic segment spans residues 259-265; that stretch reads GVNKGLR. The helical transmembrane segment at 266 to 286 threads the bilayer; sequence ILSEVNIYVSVGLMLFILFLG. Residues 287-325 are Periplasmic-facing; the sequence is NTEFLLNALVQNVGDYLSRFPSLALESFAFDQPKEWMNS. A helical membrane pass occupies residues 326 to 346; the sequence is WTLFFWAWWVAWSPFVGLFLA. Topologically, residues 347–356 are cytoplasmic; sequence RISRGRTIRE. A helical membrane pass occupies residues 357–377; it reads FVSGTLIIPLLFTLTWLSIFG. The Periplasmic segment spans residues 378–412; the sequence is NSALHNVIFDGNIALAETVLSNPAHGFYDLLAQYP. The helical transmembrane segment at 413–433 threads the bilayer; sequence WFPFIAGVATITGLLFYVTSA. Residues 434-459 are Cytoplasmic-facing; sequence DSGALVLGNFTTQFTNIDHDAPRWLS. Residues 460–480 form a helical membrane-spanning segment; that stretch reads VFWAVAIGLLTLAMLMTNGIT. Over 481–484 the chain is Periplasmic; sequence ALQN. Residues 485-505 traverse the membrane as a helical segment; it reads ATIIMGLPFSFVMFLVMAGLY. Over 506–686 the chain is Cytoplasmic; it reads KSLRLEDYRQ…NRPLFPDPKA (181 aa).

This sequence belongs to the BCCT transporter (TC 2.A.15) family.

It localises to the cell inner membrane. In terms of biological role, uptake of choline in the presence of high salinity. May primarily serve for osmoprotection. The polypeptide is Osmo-dependent choline transporter BetT2 (Acinetobacter baylyi (strain ATCC 33305 / BD413 / ADP1)).